The following is a 213-amino-acid chain: Adenylate kinase (213 aa).

Residue 10–15 (GCGKGT) participates in ATP binding. The segment at 30 to 59 (STGDLMRKEISLNTTLGLKCQEYMNAGKYV) is NMP. AMP-binding positions include Thr-31, Arg-36, 57 to 59 (KYV), 83 to 86 (GYPR), and Gln-90. Residues 124 to 161 (NRLVCPLCKASFNLETRKPKQEGLCDFDNTKLVKRSDD) are LID. Arg-125 provides a ligand contact to ATP. Cys-128 and Cys-131 together coordinate Zn(2+). Residue 134–135 (SF) participates in ATP binding. Cys-148 and Asp-151 together coordinate Zn(2+). Residues Arg-158 and Arg-169 each contribute to the AMP site. Asn-197 is an ATP binding site.

It belongs to the adenylate kinase family. Monomer.

Its subcellular location is the cytoplasm. The catalysed reaction is AMP + ATP = 2 ADP. It functions in the pathway purine metabolism; AMP biosynthesis via salvage pathway; AMP from ADP: step 1/1. Functionally, catalyzes the reversible transfer of the terminal phosphate group between ATP and AMP. Plays an important role in cellular energy homeostasis and in adenine nucleotide metabolism. This chain is Adenylate kinase, found in Mycoplasma capricolum subsp. capricolum (strain California kid / ATCC 27343 / NCTC 10154).